Consider the following 198-residue polypeptide: Transcription factor BHLH133 (198 aa).

The basic motif; degenerate stretch occupies residues 114 to 127; that stretch reads SAESSQSYYAKNRR. A bHLH domain is found at 114–163; it reads SAESSQSYYAKNRRQRINERLRILQELIPNGTKVDISTMLEEAIQYVKFL. A helix-loop-helix motif region spans residues 128-163; that stretch reads QRINERLRILQELIPNGTKVDISTMLEEAIQYVKFL.

It belongs to the bHLH protein family.

The protein resides in the nucleus. Transcription factor that acts as a regulator of iron homeostasis. May act as negative regulator of iron transportation from root to shoot. Does not seem to be involved in the suppression of the induction of iron deficiency responsive genes. The polypeptide is Transcription factor BHLH133 (Oryza sativa subsp. japonica (Rice)).